The following is a 109-amino-acid chain: Nascent polypeptide-associated complex protein (109 aa).

Residues 3 to 70 (PMNPKQMKKM…YEVVKRPPKI (68 aa)) enclose the NAC-A/B domain.

Belongs to the NAC-alpha family. As to quaternary structure, homodimer. Interacts with the ribosome. Binds ribosomal RNA.

Functionally, contacts the emerging nascent chain on the ribosome. The chain is Nascent polypeptide-associated complex protein from Archaeoglobus fulgidus (strain ATCC 49558 / DSM 4304 / JCM 9628 / NBRC 100126 / VC-16).